A 214-amino-acid chain; its full sequence is Adenylate kinase (214 aa).

Residue 10–15 (GAGKGT) participates in ATP binding. Residues 30–59 (STGDMFRDHKARGTEIGKQVQAIMDAGGLV) are NMP. Residues Thr-31, Arg-36, 57-59 (GLV), 85-88 (GYPR), and Gln-92 contribute to the AMP site. The LID stretch occupies residues 126–163 (GRRSCPRCGAVYHVSQNPPHRAGFCDRDDTALVQREDD). ATP is bound at residue Arg-127. Zn(2+)-binding residues include Cys-130 and Cys-133. 136 to 137 (VY) lines the ATP pocket. Residues Cys-150 and Asp-153 each coordinate Zn(2+). AMP-binding residues include Arg-160 and Arg-171. Gly-199 contacts ATP.

It belongs to the adenylate kinase family. In terms of assembly, monomer.

The protein resides in the cytoplasm. It carries out the reaction AMP + ATP = 2 ADP. It participates in purine metabolism; AMP biosynthesis via salvage pathway; AMP from ADP: step 1/1. Its function is as follows. Catalyzes the reversible transfer of the terminal phosphate group between ATP and AMP. Plays an important role in cellular energy homeostasis and in adenine nucleotide metabolism. The polypeptide is Adenylate kinase (Anaeromyxobacter sp. (strain K)).